Reading from the N-terminus, the 349-residue chain is Small ribosomal subunit protein uS2 (349 aa).

This sequence belongs to the universal ribosomal protein uS2 family.

This Methylobacterium sp. (strain 4-46) protein is Small ribosomal subunit protein uS2.